Here is a 66-residue protein sequence, read N- to C-terminus: Protein I177L (66 aa).

It belongs to the asfivirus I177L family.

It is found in the virion. The protein is Protein I177L of Ornithodoros (relapsing fever ticks).